Here is a 513-residue protein sequence, read N- to C-terminus: ATP synthase subunit alpha (513 aa).

Residue 169-176 (GDRQTGKT) coordinates ATP.

This sequence belongs to the ATPase alpha/beta chains family. F-type ATPases have 2 components, CF(1) - the catalytic core - and CF(0) - the membrane proton channel. CF(1) has five subunits: alpha(3), beta(3), gamma(1), delta(1), epsilon(1). CF(0) has three main subunits: a(1), b(2) and c(9-12). The alpha and beta chains form an alternating ring which encloses part of the gamma chain. CF(1) is attached to CF(0) by a central stalk formed by the gamma and epsilon chains, while a peripheral stalk is formed by the delta and b chains.

The protein resides in the cell inner membrane. The enzyme catalyses ATP + H2O + 4 H(+)(in) = ADP + phosphate + 5 H(+)(out). Its function is as follows. Produces ATP from ADP in the presence of a proton gradient across the membrane. The alpha chain is a regulatory subunit. This chain is ATP synthase subunit alpha, found in Shigella boydii serotype 18 (strain CDC 3083-94 / BS512).